The primary structure comprises 740 residues: ATP-dependent RNA helicase DDX1 (740 aa).

Positions 1 to 295 (MAAFSEMGVM…APKALIVEPS (295 aa)) are necessary for interaction with HNRNPK. Residues 1-448 (MAAFSEMGVM…DTVHHVVVPV (448 aa)) form an interaction with dsRNA region. The interval 1-525 (MAAFSEMGVM…KIDCDNLEQY (525 aa)) is necessary for interaction with RELA. A Helicase ATP-binding domain is found at 2–428 (AAFSEMGVMP…SEKIMHFPTW (427 aa)). 46–53 (AETGSGKT) contributes to the ATP binding site. The 178-residue stretch at 70–247 (DQQEGKKGKA…LKFNFGEEEF (178 aa)) folds into the B30.2/SPRY domain. N6-acetyllysine is present on residues Lys239 and Lys268. Lys281 is modified (N6-acetyllysine; alternate). Residue Lys281 forms a Glycyl lysine isopeptide (Lys-Gly) (interchain with G-Cter in SUMO2); alternate linkage. The DEAD box signature appears at 370 to 373 (DEAD). At Ser481 the chain carries Phosphoserine. Residues 493–681 (KGEYAVRAIK…QVEPDIKVPV (189 aa)) form the Helicase C-terminal domain. The tract at residues 525–740 (YFMQQGGGPD…YLPNQLFRTF (216 aa)) is necessary for interaction with HNRNPK.

The protein belongs to the DEAD box helicase family. DDX1 subfamily. In terms of assembly, found in a multi-helicase-TICAM1 complex at least composed of DHX36, DDX1, DDX21 and TICAM1; this complex exists in resting cells with or without poly(I:C) RNA ligand stimulation. Interacts with DHX36. Interacts (via B30.2/SPRY domain) with DDX21 (via N-terminus); this interaction serves as bridges to TICAM1. Interacts with FAM98A (via N- and C-terminus). Interacts with PHF5A (via C-terminus). Interacts with MBNL1. Interacts with CSTF2. Interacts with HNRNPK. Interacts with ATM. Interacts with RELA (via C-terminus). Component of the tRNA-splicing ligase complex. Interacts with PQBP1. Interacts with ERCC6. Phosphorylated by ATM kinase; phosphorylation is increased in response to ionizing radiation (IR).

The protein resides in the nucleus. Its subcellular location is the cytoplasm. The protein localises to the cytoplasmic granule. It is found in the cytosol. It localises to the mitochondrion. It catalyses the reaction ATP + H2O = ADP + phosphate + H(+). Its function is as follows. Acts as an ATP-dependent RNA helicase, able to unwind both RNA-RNA and RNA-DNA duplexes. Possesses 5' single-stranded RNA overhang nuclease activity. Possesses ATPase activity on various RNA, but not DNA polynucleotides. May play a role in RNA clearance at DNA double-strand breaks (DSBs), thereby facilitating the template-guided repair of transcriptionally active regions of the genome. Together with RELA, acts as a coactivator to enhance NF-kappa-B-mediated transcriptional activation. Acts as a positive transcriptional regulator of cyclin CCND2 expression. Binds to the cyclin CCND2 promoter region. Associates with chromatin at the NF-kappa-B promoter region via association with RELA. Binds to poly(A) RNA. May be involved in 3'-end cleavage and polyadenylation of pre-mRNAs. Component of the tRNA-splicing ligase complex required to facilitate the enzymatic turnover of catalytic subunit RTCB: together with archease (ZBTB8OS), acts by facilitating the guanylylation of RTCB, a key intermediate step in tRNA ligation. Component of a multi-helicase-TICAM1 complex that acts as a cytoplasmic sensor of viral double-stranded RNA (dsRNA) and plays a role in the activation of a cascade of antiviral responses including the induction of pro-inflammatory cytokines via the adapter molecule TICAM1. Specifically binds (via helicase ATP-binding domain) on both short and long poly(I:C) dsRNA. The polypeptide is ATP-dependent RNA helicase DDX1 (Ddx1) (Rattus norvegicus (Rat)).